The following is a 231-amino-acid chain: Putative cobalt transport protein CbiM 1 (231 aa).

Helical transmembrane passes span 6–26 (GFLP…FLIY), 41–61 (VLPL…VDIP), 79–99 (FFGP…QALL), 107–127 (TLGA…WLVF), 136–156 (VPLG…TYLI), and 172–192 (LTAF…ISII).

It belongs to the CbiM family. Forms an energy-coupling factor (ECF) transporter complex composed of an ATP-binding protein (A component, CbiO), a transmembrane protein (T component, CbiQ) and 2 possible substrate-capture proteins (S components, CbiM and CbiN) of unknown stoichimetry.

The protein resides in the cell membrane. It participates in cofactor biosynthesis; adenosylcobalamin biosynthesis. Part of the energy-coupling factor (ECF) transporter complex CbiMNOQ involved in cobalt import. The chain is Putative cobalt transport protein CbiM 1 from Methanocorpusculum labreanum (strain ATCC 43576 / DSM 4855 / Z).